Consider the following 55-residue polypeptide: Large ribosomal subunit protein bL33 (55 aa).

Belongs to the bacterial ribosomal protein bL33 family.

The chain is Large ribosomal subunit protein bL33 from Aeromonas hydrophila subsp. hydrophila (strain ATCC 7966 / DSM 30187 / BCRC 13018 / CCUG 14551 / JCM 1027 / KCTC 2358 / NCIMB 9240 / NCTC 8049).